The sequence spans 85 residues: Small ribosomal subunit protein uS17 (85 aa).

This sequence belongs to the universal ribosomal protein uS17 family. In terms of assembly, part of the 30S ribosomal subunit.

Its function is as follows. One of the primary rRNA binding proteins, it binds specifically to the 5'-end of 16S ribosomal RNA. The sequence is that of Small ribosomal subunit protein uS17 from Mycoplasma genitalium (strain ATCC 33530 / DSM 19775 / NCTC 10195 / G37) (Mycoplasmoides genitalium).